A 371-amino-acid chain; its full sequence is Fructose-1,6-bisphosphatase class 1 1 (371 aa).

The Mg(2+) site is built by Glu115, Asp134, Leu136, and Asp137. Substrate-binding positions include 137–140 (DGSS), Asn228, and 280–282 (YLY). Residue Glu300 participates in Mg(2+) binding.

Belongs to the FBPase class 1 family. As to quaternary structure, homotetramer. The cofactor is Mg(2+).

Its subcellular location is the cytoplasm. It carries out the reaction beta-D-fructose 1,6-bisphosphate + H2O = beta-D-fructose 6-phosphate + phosphate. It functions in the pathway carbohydrate biosynthesis; gluconeogenesis. The polypeptide is Fructose-1,6-bisphosphatase class 1 1 (Xanthobacter autotrophicus (strain ATCC BAA-1158 / Py2)).